A 372-amino-acid chain; its full sequence is 4-hydroxy-3-methylbut-2-en-1-yl diphosphate synthase (flavodoxin) (372 aa).

[4Fe-4S] cluster contacts are provided by Cys270, Cys273, Cys305, and Glu312.

It belongs to the IspG family. [4Fe-4S] cluster is required as a cofactor.

It catalyses the reaction (2E)-4-hydroxy-3-methylbut-2-enyl diphosphate + oxidized [flavodoxin] + H2O + 2 H(+) = 2-C-methyl-D-erythritol 2,4-cyclic diphosphate + reduced [flavodoxin]. It participates in isoprenoid biosynthesis; isopentenyl diphosphate biosynthesis via DXP pathway; isopentenyl diphosphate from 1-deoxy-D-xylulose 5-phosphate: step 5/6. Converts 2C-methyl-D-erythritol 2,4-cyclodiphosphate (ME-2,4cPP) into 1-hydroxy-2-methyl-2-(E)-butenyl 4-diphosphate. The polypeptide is 4-hydroxy-3-methylbut-2-en-1-yl diphosphate synthase (flavodoxin) (Shigella dysenteriae serotype 1 (strain Sd197)).